Consider the following 416-residue polypeptide: Thioredoxin domain-containing protein 5 homolog (416 aa).

The N-terminal stretch at 1–25 (MLTRSILSVAVCGLLLSPLLPITRA) is a signal peptide. Thioredoxin domains follow at residues 26 to 145 (SQEE…KELS), 150 to 272 (ADLG…KMVG), and 293 to 412 (AGEE…KFLG). Intrachain disulfides connect Cys65/Cys68, Cys194/Cys197, and Cys331/Cys334. The Prevents secretion from ER motif lies at 413–416 (HDEL).

This sequence belongs to the protein disulfide isomerase family.

The protein localises to the endoplasmic reticulum. Its subcellular location is the cell surface. Possesses thioredoxin activity. Acts as a ligand for Drpr and is required for the phagocytosis of apoptotic cells. Binds to the extracellular region of Drpr and augments Drpr tyrosine phosphorylation. The chain is Thioredoxin domain-containing protein 5 homolog from Drosophila melanogaster (Fruit fly).